Here is a 283-residue protein sequence, read N- to C-terminus: Protein ATAF2 (283 aa).

In terms of domain architecture, NAC spans 7–159 (LPAGFRFHPT…DWVLCRIYNK (153 aa)). The DNA-binding element occupies 103-165 (LGIKKALVFY…IYNKKGTMEK (63 aa)). Residues 171 to 211 (EKPRTTTMAEQSSSPFDTSDSTYPTLQEDDSSSSGGHGHVV) are disordered. Over residues 175–195 (TTTMAEQSSSPFDTSDSTYPT) the composition is skewed to polar residues.

Homodimer. Interacts with AHK2. Interacts with AHL12 and AHL27. Interacts with the helicase domain of the tobamovirus (TMV) replicase. Expressed in roots, cotyledons, rosette leaves, cauline leaves and mature flowers. Expressed at low levels in stems and flower buds.

The protein localises to the nucleus. In terms of biological role, involved in disease resistance response. May function as repressor of pathogenesis-related proteins. May function in the regulation of host basal defense responses against viral infection. Transcriptional activator involved in responses to wounding and infection with tobamovirus (TMV). Binds to the DNA sequences 5'-AAAATATCT-3' and 5'AGATTTTT-3' of CYP734A1/BAS1 and CYP72C1/SOB7 promoters, respectively. Acts as a suppressor of the brassinosteroid (BR)-inactivating enzymes CYP734A1/BAS1 and CYP72C1/SOB7, and prevents their expression in almost all tissues. Plays a central role in integrating BR homeostasis and seedling development. Regulates the spatial regulation of BR homeostasis and participates in the regulation of hypocotyl elongation and root growth by suppressing BR catabolism. Mediates connection between BR catabolism and photomorphogenesis. Binds to, and transactivates the promoter of the auxin biosynthetic gene NIT2. Stress-responsive NAC transcription factor involved in ABA-inducible leaf senescence signaling. Required for normal seed development and morphology. The sequence is that of Protein ATAF2 (NAC081) from Arabidopsis thaliana (Mouse-ear cress).